The chain runs to 409 residues: Arginine biosynthesis bifunctional protein ArgJ (409 aa).

Substrate contacts are provided by Thr156, Lys182, Thr193, Glu280, Asn404, and Ser409. Thr193 serves as the catalytic Nucleophile.

Belongs to the ArgJ family. As to quaternary structure, heterotetramer of two alpha and two beta chains.

The protein localises to the cytoplasm. The catalysed reaction is N(2)-acetyl-L-ornithine + L-glutamate = N-acetyl-L-glutamate + L-ornithine. The enzyme catalyses L-glutamate + acetyl-CoA = N-acetyl-L-glutamate + CoA + H(+). It participates in amino-acid biosynthesis; L-arginine biosynthesis; L-ornithine and N-acetyl-L-glutamate from L-glutamate and N(2)-acetyl-L-ornithine (cyclic): step 1/1. Its pathway is amino-acid biosynthesis; L-arginine biosynthesis; N(2)-acetyl-L-ornithine from L-glutamate: step 1/4. Its function is as follows. Catalyzes two activities which are involved in the cyclic version of arginine biosynthesis: the synthesis of N-acetylglutamate from glutamate and acetyl-CoA as the acetyl donor, and of ornithine by transacetylation between N(2)-acetylornithine and glutamate. The sequence is that of Arginine biosynthesis bifunctional protein ArgJ from Ralstonia nicotianae (strain ATCC BAA-1114 / GMI1000) (Ralstonia solanacearum).